Consider the following 833-residue polypeptide: Leucine--tRNA ligase (833 aa).

The short motif at P41 to H52 is the 'HIGH' region element. A 'KMSKS' region motif is present at residues K610 to S614. Position 613 (K613) interacts with ATP.

The protein belongs to the class-I aminoacyl-tRNA synthetase family.

Its subcellular location is the cytoplasm. It carries out the reaction tRNA(Leu) + L-leucine + ATP = L-leucyl-tRNA(Leu) + AMP + diphosphate. This Streptococcus pyogenes serotype M6 (strain ATCC BAA-946 / MGAS10394) protein is Leucine--tRNA ligase.